The chain runs to 414 residues: Probable isoprenylcysteine alpha-carbonyl methylesterase ICME (414 aa).

Positions 1 to 54 are disordered; it reads MQPASPVSGDAGPVAEAVPPRGAPQVLVRRRSVPFSPDSPLAPGSRGGGERRST. 2 helical membrane-spanning segments follow: residues 90 to 110 and 145 to 165; these read LAALIIYAILLMPGFIRVGYY and VVAFVTGGAWIIGYKAWGALL. Substrate-binding positions include 151-153 and 222-224; these read GGA and QSA. Active-site residues include Ser223, Asp323, and His355.

Belongs to the AB hydrolase superfamily. Isoprenylcysteine methylesterase family.

The protein localises to the endoplasmic reticulum membrane. It localises to the golgi apparatus membrane. The catalysed reaction is [protein]-C-terminal S-[(2E,6E)-farnesyl]-L-cysteine methyl ester + H2O = [protein]-C-terminal S-[(2E,6E)-farnesyl]-L-cysteine + methanol + H(+). Its function is as follows. Catalyzes the demethylation of isoprenylcysteine methylesters. This chain is Probable isoprenylcysteine alpha-carbonyl methylesterase ICME (IMCE), found in Oryza sativa subsp. japonica (Rice).